Consider the following 790-residue polypeptide: Lysine biosynthesis regulatory protein LYS14 (790 aa).

2 disordered regions span residues 1–50 and 72–157; these read MFES…SCFE and FNHK…YSRN. The span at 35-47 shows a compositional bias: low complexity; sequence SGSSFTNSGTSTS. 2 stretches are compositionally biased toward polar residues: residues 75-113 and 120-142; these read KQMT…SEQD and TISQ…TSTV. A DNA-binding region (zn(2)-C6 fungal-type) is located at residues 159 to 186; it reads CSECKRRRMKCDETKPTCWQCARLNRQC. The tract at residues 195 to 258 is disordered; sequence KKRRTSNAQR…PKPITDNGKN (64 aa). Basic residues predominate over residues 222 to 239; that stretch reads ARKRQHSSCKAEKKKKVR.

The protein localises to the nucleus. Functionally, activates the transcription of lysine biosynthesis genes. This activation is dependent on the inducer alpha-aminoadipate semialdehyde and repressed by lysine. In Saccharomyces cerevisiae (strain ATCC 204508 / S288c) (Baker's yeast), this protein is Lysine biosynthesis regulatory protein LYS14 (LYS14).